Here is a 157-residue protein sequence, read N- to C-terminus: Large ribosomal subunit protein uL15 (157 aa).

Positions 1–64 (MKLNEIPAVP…MPLQRRLPKR (64 aa)) are disordered. Residues 21-31 (RGPGSGNGKTA) are compositionally biased toward gly residues.

It belongs to the universal ribosomal protein uL15 family. In terms of assembly, part of the 50S ribosomal subunit.

Its function is as follows. Binds to the 23S rRNA. The chain is Large ribosomal subunit protein uL15 from Magnetococcus marinus (strain ATCC BAA-1437 / JCM 17883 / MC-1).